A 650-amino-acid chain; its full sequence is 1-deoxy-D-xylulose-5-phosphate synthase (650 aa).

Thiamine diphosphate-binding positions include H73 and 113-115 (SHA). D145 is a binding site for Mg(2+). Thiamine diphosphate is bound by residues 146–147 (GA), N175, Y287, and E369. N175 provides a ligand contact to Mg(2+). Residues 629-650 (SARPLPEDAERVPMRAEDDEQA) are disordered. The segment covering 633-644 (LPEDAERVPMRA) has biased composition (basic and acidic residues).

Belongs to the transketolase family. DXPS subfamily. As to quaternary structure, homodimer. Mg(2+) serves as cofactor. The cofactor is thiamine diphosphate.

It carries out the reaction D-glyceraldehyde 3-phosphate + pyruvate + H(+) = 1-deoxy-D-xylulose 5-phosphate + CO2. It functions in the pathway metabolic intermediate biosynthesis; 1-deoxy-D-xylulose 5-phosphate biosynthesis; 1-deoxy-D-xylulose 5-phosphate from D-glyceraldehyde 3-phosphate and pyruvate: step 1/1. Functionally, catalyzes the acyloin condensation reaction between C atoms 2 and 3 of pyruvate and glyceraldehyde 3-phosphate to yield 1-deoxy-D-xylulose-5-phosphate (DXP). The polypeptide is 1-deoxy-D-xylulose-5-phosphate synthase (Clavibacter sepedonicus (Clavibacter michiganensis subsp. sepedonicus)).